The sequence spans 115 residues: NADH-ubiquinone oxidoreductase chain 3 (115 aa).

The next 3 helical transmembrane spans lie at 3 to 23 (LALALMINTLLALLLMTITFW), 55 to 75 (FFLVAITFLLFDLEIALLLPL), and 86 to 106 (LTIASSLTLITILILSLAYEW).

The protein belongs to the complex I subunit 3 family. Core subunit of respiratory chain NADH dehydrogenase (Complex I) which is composed of 45 different subunits. Interacts with TMEM186. Interacts with TMEM242.

It is found in the mitochondrion inner membrane. The catalysed reaction is a ubiquinone + NADH + 5 H(+)(in) = a ubiquinol + NAD(+) + 4 H(+)(out). In terms of biological role, core subunit of the mitochondrial membrane respiratory chain NADH dehydrogenase (Complex I) which catalyzes electron transfer from NADH through the respiratory chain, using ubiquinone as an electron acceptor. Essential for the catalytic activity of complex I. The chain is NADH-ubiquinone oxidoreductase chain 3 from Hylobates lar (Lar gibbon).